Reading from the N-terminus, the 255-residue chain is Taurine import ATP-binding protein TauB (255 aa).

The region spanning 2–229 (LQISHLYADY…RFVAGESSRS (228 aa)) is the ABC transporter domain. ATP is bound at residue 34–41 (GPSGCGKT).

It belongs to the ABC transporter superfamily. Taurine importer (TC 3.A.1.17.1) family. The complex is composed of two ATP-binding proteins (TauB), two transmembrane proteins (TauC) and a solute-binding protein (TauA).

It localises to the cell inner membrane. The catalysed reaction is taurine(out) + ATP + H2O = taurine(in) + ADP + phosphate + H(+). Functionally, part of the ABC transporter complex TauABC involved in taurine import. Responsible for energy coupling to the transport system. The chain is Taurine import ATP-binding protein TauB from Shigella dysenteriae serotype 1 (strain Sd197).